Reading from the N-terminus, the 513-residue chain is Zinc finger CCCH-type with G patch domain-containing protein (513 aa).

The C3H1-type zinc finger occupies 155 to 178 (PCSYYLEGECRFDETKCRFSHGAL). Composition is skewed to acidic residues over residues 252-261 (DQDEDDELSS) and 271-283 (DSSD…MDDL). Residues 252–283 (DQDEDDELSSEESNSSMNDDSSDEAESDMDDL) are disordered. In terms of domain architecture, G-patch spans 312–358 (TRGIGSKLMEKMGYIHGTGLGSDGRGIVTPVSAQILPQGRSLDACME). Over residues 455–467 (DMAKVKQSLDRNS) the composition is skewed to basic and acidic residues. Positions 455-513 (DMAKVKQSLDRNSGDAQLQKRLQVQMESHKQELATLQAQERSLSKEQQTRKSKNKMFEF) are disordered. Residues 468–480 (GDAQLQKRLQVQM) show a composition bias toward polar residues. The span at 496–513 (SLSKEQQTRKSKNKMFEF) shows a compositional bias: basic and acidic residues.

The protein resides in the nucleus. Functionally, transcription repressor. The sequence is that of Zinc finger CCCH-type with G patch domain-containing protein from Drosophila yakuba (Fruit fly).